Here is a 244-residue protein sequence, read N- to C-terminus: 1-(5-phosphoribosyl)-5-[(5-phosphoribosylamino)methylideneamino] imidazole-4-carboxamide isomerase (244 aa).

The active-site Proton acceptor is aspartate 9. The Proton donor role is filled by aspartate 131.

The protein belongs to the HisA/HisF family.

The protein resides in the cytoplasm. It carries out the reaction 1-(5-phospho-beta-D-ribosyl)-5-[(5-phospho-beta-D-ribosylamino)methylideneamino]imidazole-4-carboxamide = 5-[(5-phospho-1-deoxy-D-ribulos-1-ylimino)methylamino]-1-(5-phospho-beta-D-ribosyl)imidazole-4-carboxamide. Its pathway is amino-acid biosynthesis; L-histidine biosynthesis; L-histidine from 5-phospho-alpha-D-ribose 1-diphosphate: step 4/9. The protein is 1-(5-phosphoribosyl)-5-[(5-phosphoribosylamino)methylideneamino] imidazole-4-carboxamide isomerase of Campylobacter jejuni subsp. doylei (strain ATCC BAA-1458 / RM4099 / 269.97).